The sequence spans 240 residues: UDP-2,3-diacylglucosamine hydrolase (240 aa).

Positions 8, 10, 41, 79, and 114 each coordinate Mn(2+). Residue 79 to 80 (NR) coordinates substrate. The substrate site is built by Asp-122, Ser-160, Asn-164, Lys-167, and His-195. Mn(2+)-binding residues include His-195 and His-197.

The protein belongs to the LpxH family. Mn(2+) serves as cofactor.

The protein localises to the cell inner membrane. The catalysed reaction is UDP-2-N,3-O-bis[(3R)-3-hydroxytetradecanoyl]-alpha-D-glucosamine + H2O = 2-N,3-O-bis[(3R)-3-hydroxytetradecanoyl]-alpha-D-glucosaminyl 1-phosphate + UMP + 2 H(+). It participates in glycolipid biosynthesis; lipid IV(A) biosynthesis; lipid IV(A) from (3R)-3-hydroxytetradecanoyl-[acyl-carrier-protein] and UDP-N-acetyl-alpha-D-glucosamine: step 4/6. Functionally, hydrolyzes the pyrophosphate bond of UDP-2,3-diacylglucosamine to yield 2,3-diacylglucosamine 1-phosphate (lipid X) and UMP by catalyzing the attack of water at the alpha-P atom. Involved in the biosynthesis of lipid A, a phosphorylated glycolipid that anchors the lipopolysaccharide to the outer membrane of the cell. This Salmonella agona (strain SL483) protein is UDP-2,3-diacylglucosamine hydrolase.